We begin with the raw amino-acid sequence, 154 residues long: Interleukin-2 (154 aa).

An N-terminal signal peptide occupies residues 1-20 (MYKIQLLSCIALTLILVTNS). Cys-78 and Cys-126 form a disulfide bridge. N-linked (GlcNAc...) asparagine glycosylation occurs at Asn-111.

The protein belongs to the IL-2 family.

It localises to the secreted. In terms of biological role, cytokine produced by activated CD4-positive helper T-cells and to a lesser extend activated CD8-positive T-cells and natural killer (NK) cells that plays pivotal roles in the immune response and tolerance. Binds to a receptor complex composed of either the high-affinity trimeric IL-2R (IL2RA/CD25, IL2RB/CD122 and IL2RG/CD132) or the low-affinity dimeric IL-2R (IL2RB and IL2RG). Interaction with the receptor leads to oligomerization and conformation changes in the IL-2R subunits resulting in downstream signaling starting with phosphorylation of JAK1 and JAK3. In turn, JAK1 and JAK3 phosphorylate the receptor to form a docking site leading to the phosphorylation of several substrates including STAT5. This process leads to activation of several pathways including STAT, phosphoinositide-3-kinase/PI3K and mitogen-activated protein kinase/MAPK pathways. Functions as a T-cell growth factor and can increase NK-cell cytolytic activity as well. Promotes strong proliferation of activated B-cells and subsequently immunoglobulin production. Plays a pivotal role in regulating the adaptive immune system by controlling the survival and proliferation of regulatory T-cells, which are required for the maintenance of immune tolerance. Moreover, participates in the differentiation and homeostasis of effector T-cell subsets, including Th1, Th2, Th17 as well as memory CD8-positive T-cells. The protein is Interleukin-2 (IL2) of Felis catus (Cat).